Reading from the N-terminus, the 144-residue chain is Large ribosomal subunit protein uL16 (144 aa).

It belongs to the universal ribosomal protein uL16 family. Part of the 50S ribosomal subunit.

Its function is as follows. Binds 23S rRNA and is also seen to make contacts with the A and possibly P site tRNAs. In Acidobacterium capsulatum (strain ATCC 51196 / DSM 11244 / BCRC 80197 / JCM 7670 / NBRC 15755 / NCIMB 13165 / 161), this protein is Large ribosomal subunit protein uL16.